Here is an 866-residue protein sequence, read N- to C-terminus: MASSAQSPHFYLNPGKSNSFQSKAYKQRNVNFYWNFGIRRLFLRKSQGLSVLSSSSSSTHFSNSQLHGLCANGKLEEAMKLLNSMQELRVAVDEDVFVALVRLCEWKRAQEEGSKVYSIALSSMSSLGVELGNAFLAMFVRFGNLVDAWYVFGKMSERNLFSWNVLVGGYAKQGYFDEAMCLYHRMLWVGGVKPDVYTFPCVLRTCGGIPDLARGKEVHVHVVRYGYELDIDVVNALITMYVKCGDVKSARLLFDRMPRRDIISWNAMISGYFENGMCHEGLELFFAMRGLSVDPDLMTLTSVISACELLGDRRLGRDIHAYVITTGFAVDISVCNSLTQMYLNAGSWREAEKLFSRMERKDIVSWTTMISGYEYNFLPDKAIDTYRMMDQDSVKPDEITVAAVLSACATLGDLDTGVELHKLAIKARLISYVIVANNLINMYSKCKCIDKALDIFHNIPRKNVISWTSIIAGLRLNNRCFEALIFLRQMKMTLQPNAITLTAALAACARIGALMCGKEIHAHVLRTGVGLDDFLPNALLDMYVRCGRMNTAWSQFNSQKKDVTSWNILLTGYSERGQGSMVVELFDRMVKSRVRPDEITFISLLCGCSKSQMVRQGLMYFSKMEDYGVTPNLKHYACVVDLLGRAGELQEAHKFIQKMPVTPDPAVWGALLNACRIHHKIDLGELSAQHIFELDKKSVGYYILLCNLYADCGKWREVAKVRRMMKENGLTVDAGCSWVEVKGKVHAFLSDDKYHPQTKEINTVLEGFYEKMSEVGLTKISESSSMDETEISRDEIFCGHSERKAIAFGLINTVPGMPIWVTKNLSMCENCHDTVKFISKTVRREISVRDAEHFHHFKDGECSCGD.

The N-terminal 52 residues, 1 to 52 (MASSAQSPHFYLNPGKSNSFQSKAYKQRNVNFYWNFGIRRLFLRKSQGLSVL), are a transit peptide targeting the chloroplast. PPR repeat units follow at residues 58–92 (STHF…RVAV), 93–123 (DEDV…ALSS), 128–158 (GVEL…MSER), 159–194 (NLFS…GVKP), 195–229 (DVYT…GYEL), 230–260 (DIDV…MPRR), 261–295 (DIIS…SVDP), 296–330 (DLMT…GFAV), 331–365 (DISV…DIVS), 366–396 (WTTM…SVKP), 397–431 (DEIT…RLIS), 432–466 (YVIV…NVIS), 467–493 (WTSI…MKMT), 497–531 (NAIT…GVGL), 532–561 (DDFL…SQKK), 562–596 (DVTS…RVRP), 597–631 (DEIT…GVTP), and 632–662 (NLKH…MPVT). A type E motif region spans residues 667–742 (VWGALLNACR…DAGCSWVEVK (76 aa)). Residues 743 to 773 (GKVHAFLSDDKYHPQTKEINTVLEGFYEKMS) are type E(+) motif. The segment at 774 to 866 (EVGLTKISES…FKDGECSCGD (93 aa)) is type DYW motif.

The protein belongs to the PPR family. PCMP-H subfamily.

The protein resides in the plastid. It localises to the chloroplast. In terms of biological role, regulates the RNA editing of the chloroplast transcript accD, and is essential for the early stages of chloroplast biogenesis. Required for the RNA editing of the chloroplast transcript ndhF. The sequence is that of Pentatricopeptide repeat-containing protein At1g15510, chloroplastic (PCMP-H73) from Arabidopsis thaliana (Mouse-ear cress).